We begin with the raw amino-acid sequence, 89 residues long: DNA/RNA-binding protein Alba (89 aa).

K11 carries the N6-acetyllysine modification.

This sequence belongs to the histone-like Alba family. Post-translationally, acetylated. Acetylation at Lys-11 decreases DNA-binding affinity.

The protein localises to the cytoplasm. The protein resides in the chromosome. Binds double-stranded DNA tightly but without sequence specificity. Involved in DNA compaction. The protein is DNA/RNA-binding protein Alba of Thermoplasma volcanium (strain ATCC 51530 / DSM 4299 / JCM 9571 / NBRC 15438 / GSS1).